The chain runs to 374 residues: MNRSRTSSFSTDRSASTVALAPDGDYERERVSALASWPEYAVDALRSEQDFIVHQSAALWTHRTPALHDPDSQETQLDVAKGLLARERETHGSFVFDARAAHHCAFRSQLVEWILDVCAGERFGPTTADVAIAYTDRVLSKTVVPKTSLHLVALCCLHIAVKYEEIEERVPTMSKLRSWTSNMYSPEIIRKMELAVLIELGWDLGVLTPAHFLESFLALTNGGISDGDDIEHGDAYKERYREELRYFVCQLYSLCVQDTSLLNQPPSQIASAVIATARVHLGVKPMCSPELRAAGNVTPQQIYPLVAHMLKLWDEACAEDEAMDEVETSAEFNSLTIQVPKPIGHDIVSKMGYEHRVTENASPTCPFDMQWDEE.

Belongs to the cyclin family. Cyclin D subfamily.

This Ostreococcus tauri protein is Cyclin-D (CycD).